The chain runs to 158 residues: NAD(P)H-quinone oxidoreductase subunit J, chloroplastic (158 aa).

It belongs to the complex I 30 kDa subunit family. As to quaternary structure, NDH is composed of at least 16 different subunits, 5 of which are encoded in the nucleus.

Its subcellular location is the plastid. It localises to the chloroplast thylakoid membrane. The enzyme catalyses a plastoquinone + NADH + (n+1) H(+)(in) = a plastoquinol + NAD(+) + n H(+)(out). It catalyses the reaction a plastoquinone + NADPH + (n+1) H(+)(in) = a plastoquinol + NADP(+) + n H(+)(out). NDH shuttles electrons from NAD(P)H:plastoquinone, via FMN and iron-sulfur (Fe-S) centers, to quinones in the photosynthetic chain and possibly in a chloroplast respiratory chain. The immediate electron acceptor for the enzyme in this species is believed to be plastoquinone. Couples the redox reaction to proton translocation, and thus conserves the redox energy in a proton gradient. In Aethionema cordifolium (Lebanon stonecress), this protein is NAD(P)H-quinone oxidoreductase subunit J, chloroplastic.